Here is a 319-residue protein sequence, read N- to C-terminus: tRNA uridine(34) hydroxylase (319 aa).

The Rhodanese domain maps to 127 to 221; that stretch reads KQEDTVIIDA…YGKDPEVQGE (95 aa). Residue cysteine 181 is the Cysteine persulfide intermediate of the active site.

It belongs to the TrhO family.

It carries out the reaction uridine(34) in tRNA + AH2 + O2 = 5-hydroxyuridine(34) in tRNA + A + H2O. Catalyzes oxygen-dependent 5-hydroxyuridine (ho5U) modification at position 34 in tRNAs. This Bacillus mycoides (strain KBAB4) (Bacillus weihenstephanensis) protein is tRNA uridine(34) hydroxylase.